Reading from the N-terminus, the 150-residue chain is Ribonuclease H (150 aa).

Residues 1–142 (MSDSVELFTD…ADQLANRGVD (142 aa)) form the RNase H type-1 domain. Residues Asp10, Glu48, Asp70, and Asp134 each coordinate Mg(2+).

The protein belongs to the RNase H family. As to quaternary structure, monomer. The cofactor is Mg(2+).

Its subcellular location is the cytoplasm. The enzyme catalyses Endonucleolytic cleavage to 5'-phosphomonoester.. Endonuclease that specifically degrades the RNA of RNA-DNA hybrids. In Pseudomonas syringae pv. syringae (strain B728a), this protein is Ribonuclease H.